The sequence spans 75 residues: Small ribosomal subunit protein bS18 (75 aa).

Belongs to the bacterial ribosomal protein bS18 family. Part of the 30S ribosomal subunit. Forms a tight heterodimer with protein bS6.

Binds as a heterodimer with protein bS6 to the central domain of the 16S rRNA, where it helps stabilize the platform of the 30S subunit. In Histophilus somni (strain 129Pt) (Haemophilus somnus), this protein is Small ribosomal subunit protein bS18.